The primary structure comprises 204 residues: ADP-ribosylation factor-like protein 15 (204 aa).

Residues 39 to 46 (GLTGSGKT), 82 to 86 (ELGGA), and 142 to 145 (NHQD) contribute to the GTP site.

The protein belongs to the small GTPase superfamily. Arf family.

This chain is ADP-ribosylation factor-like protein 15 (ARL15), found in Pongo abelii (Sumatran orangutan).